Reading from the N-terminus, the 208-residue chain is FMN-dependent NADH:quinone oxidoreductase (208 aa).

Residues serine 9, 15–17 (SAS), 96–99 (MYNF), and 140–143 (TRGG) contribute to the FMN site.

This sequence belongs to the azoreductase type 1 family. Homodimer. The cofactor is FMN.

It carries out the reaction 2 a quinone + NADH + H(+) = 2 a 1,4-benzosemiquinone + NAD(+). The catalysed reaction is N,N-dimethyl-1,4-phenylenediamine + anthranilate + 2 NAD(+) = 2-(4-dimethylaminophenyl)diazenylbenzoate + 2 NADH + 2 H(+). In terms of biological role, quinone reductase that provides resistance to thiol-specific stress caused by electrophilic quinones. Its function is as follows. Also exhibits azoreductase activity. Catalyzes the reductive cleavage of the azo bond in aromatic azo compounds to the corresponding amines. In Ralstonia nicotianae (strain ATCC BAA-1114 / GMI1000) (Ralstonia solanacearum), this protein is FMN-dependent NADH:quinone oxidoreductase.